The following is a 458-amino-acid chain: Cysteine--tRNA ligase (458 aa).

Cys27 is a binding site for Zn(2+). Residues 29–39 (MTVYDYMHIGH) carry the 'HIGH' region motif. Zn(2+) contacts are provided by Cys208, His233, and Glu237. The short motif at 265-269 (KMSKS) is the 'KMSKS' region element. Lys268 serves as a coordination point for ATP.

Belongs to the class-I aminoacyl-tRNA synthetase family. In terms of assembly, monomer. The cofactor is Zn(2+).

The protein resides in the cytoplasm. It catalyses the reaction tRNA(Cys) + L-cysteine + ATP = L-cysteinyl-tRNA(Cys) + AMP + diphosphate. The polypeptide is Cysteine--tRNA ligase (Coxiella burnetii (strain Dugway 5J108-111)).